The following is a 1082-amino-acid chain: uncharacterized protein (1082 aa).

The 270-residue stretch at 50–319 (TTMTGGVSLA…LDNRPIGVLF (270 aa)) folds into the PNPLA domain. The GXSXG motif lies at 120-124 (GTSAG). The active-site Nucleophile is the S122. The active-site Proton acceptor is D306. Residues 306–308 (DGG) carry the DGA/G motif. The next 4 helical transmembrane spans lie at 959-979 (IARSTIIAGALLLVLGVAAAI), 982-1002 (VTVFGVTGLIAAGTGGLLVVL), 1012-1032 (LFALLSFSVVGAVLALATPVV), and 1057-1077 (WWHPLVVVGLIALVAIMIAAA).

The protein localises to the cell membrane. This is an uncharacterized protein from Mycobacterium tuberculosis (strain ATCC 25618 / H37Rv).